The following is a 252-amino-acid chain: Ubiquinone biosynthesis O-methyltransferase (252 aa).

4 residues coordinate S-adenosyl-L-methionine: Arg-45, Gly-76, Asp-97, and Met-141.

Belongs to the methyltransferase superfamily. UbiG/COQ3 family.

The enzyme catalyses a 3-demethylubiquinol + S-adenosyl-L-methionine = a ubiquinol + S-adenosyl-L-homocysteine + H(+). It carries out the reaction a 3-(all-trans-polyprenyl)benzene-1,2-diol + S-adenosyl-L-methionine = a 2-methoxy-6-(all-trans-polyprenyl)phenol + S-adenosyl-L-homocysteine + H(+). Its pathway is cofactor biosynthesis; ubiquinone biosynthesis. Functionally, O-methyltransferase that catalyzes the 2 O-methylation steps in the ubiquinone biosynthetic pathway. This chain is Ubiquinone biosynthesis O-methyltransferase, found in Caulobacter vibrioides (strain ATCC 19089 / CIP 103742 / CB 15) (Caulobacter crescentus).